A 228-amino-acid chain; its full sequence is Endo-1,4-beta-xylanase A (228 aa).

The first 27 residues, 1-27, serve as a signal peptide directing secretion; sequence MNLRKLRLLFVMCIGLTLILTAVPAHA. The 194-residue stretch at 29–222 folds into the GH11 domain; that stretch reads TITNNEMGNH…SSGSANVMTN (194 aa). Glu120 acts as the Nucleophile in catalysis. Residue Glu209 is the Proton donor of the active site.

This sequence belongs to the glycosyl hydrolase 11 (cellulase G) family.

The enzyme catalyses Endohydrolysis of (1-&gt;4)-beta-D-xylosidic linkages in xylans.. It participates in glycan degradation; xylan degradation. The sequence is that of Endo-1,4-beta-xylanase A (xynA) from Bacillus pumilus (Bacillus mesentericus).